An 880-amino-acid chain; its full sequence is Leucine--tRNA ligase (880 aa).

Residues 49–59 carry the 'HIGH' region motif; that stretch reads PYPSGRIHMGH. The 'KMSKS' region motif lies at 638–642; sequence KMSKS. Lysine 641 serves as a coordination point for ATP.

The protein belongs to the class-I aminoacyl-tRNA synthetase family.

Its subcellular location is the cytoplasm. It catalyses the reaction tRNA(Leu) + L-leucine + ATP = L-leucyl-tRNA(Leu) + AMP + diphosphate. In Bartonella quintana (strain Toulouse) (Rochalimaea quintana), this protein is Leucine--tRNA ligase.